The following is a 402-amino-acid chain: Protein prenyltransferase alpha subunit repeat-containing protein 1 (402 aa).

Residue Ala-2 is modified to N-acetylalanine. PFTA repeat units follow at residues 87-120 (LIDV…LNPI), 122-155 (DLHL…QETS), 180-213 (EMEV…KLDV), and 219-252 (ELSS…SQTV). The segment at 263–282 (LRSEPALVPPKDEEAAVSTE) is disordered. The stretch at 295 to 328 (EVEFSTDLIDSYPGHETLWCHRRHIFYLQHHLNA) is one PFTA 5 repeat.

It belongs to the protein prenyltransferase subunit alpha family.

This chain is Protein prenyltransferase alpha subunit repeat-containing protein 1 (PTAR1), found in Homo sapiens (Human).